Consider the following 221-residue polypeptide: Ktr system potassium uptake protein C (221 aa).

The region spanning 2-118 (KKEFAVIGLG…LSKIGADHIV (117 aa)) is the RCK N-terminal domain. NAD(+)-binding positions include R12, 32–34 (DID), 52–53 (DS), 74–76 (IGE), 99–101 (KAQ), H105, and E121. The RCK C-terminal domain occupies 135 to 219 (NNVLDYLELS…ISRFEKRVLH (85 aa)).

It belongs to the KtrA potassium transport family. As to quaternary structure, homodimer, tetramer (dimer of homodimer) and octamer (tetramer of homodimer). Part of the KtrCD complex formed by an octameric catalytic ring of KtrC and a membrane associated dimer of KtrD forming a potassium channel.

It localises to the cell membrane. Catalytic subunit of the KtrCD potassium uptake transporter. The 2 major potassium transporter complexes KtrAB and KtrCD confer resistance to both suddenly imposed and prolonged osmotic stress. The chain is Ktr system potassium uptake protein C (ktrC) from Bacillus subtilis (strain 168).